Reading from the N-terminus, the 177-residue chain is Dihydrofolate reductase type 9 (177 aa).

A DHFR domain is found at 3 to 167 (SLNMIVAVNK…TKLIFQIWIN (165 aa)).

This sequence belongs to the dihydrofolate reductase family. In terms of assembly, homodimer.

The enzyme catalyses (6S)-5,6,7,8-tetrahydrofolate + NADP(+) = 7,8-dihydrofolate + NADPH + H(+). Its pathway is cofactor biosynthesis; tetrahydrofolate biosynthesis; 5,6,7,8-tetrahydrofolate from 7,8-dihydrofolate: step 1/1. In terms of biological role, key enzyme in folate metabolism. Catalyzes an essential reaction for de novo glycine and purine synthesis, and for DNA precursor synthesis. The protein is Dihydrofolate reductase type 9 (dhfrIX) of Escherichia coli.